A 216-amino-acid polypeptide reads, in one-letter code: 2-hydroxy-3-keto-5-methylthiopentenyl-1-phosphate phosphatase (216 aa).

It belongs to the HAD-like hydrolase superfamily. MtnX family.

It catalyses the reaction 2-hydroxy-5-methylsulfanyl-3-oxopent-1-enyl phosphate + H2O = 1,2-dihydroxy-5-(methylsulfanyl)pent-1-en-3-one + phosphate. It functions in the pathway amino-acid biosynthesis; L-methionine biosynthesis via salvage pathway; L-methionine from S-methyl-5-thio-alpha-D-ribose 1-phosphate: step 4/6. Dephosphorylates 2-hydroxy-3-keto-5-methylthiopentenyl-1-phosphate (HK-MTPenyl-1-P) yielding 1,2-dihydroxy-3-keto-5-methylthiopentene (DHK-MTPene). The polypeptide is 2-hydroxy-3-keto-5-methylthiopentenyl-1-phosphate phosphatase (Exiguobacterium sp. (strain ATCC BAA-1283 / AT1b)).